Consider the following 528-residue polypeptide: Sodium-dependent lysophosphatidylcholine symporter 1 (528 aa).

The Cytoplasmic segment spans residues 1–37 (MAGGGGAERVRVGAAAAGLLPPSCRQPRRRESRERLS). The chain crosses the membrane as a helical span at residues 38 to 66 (VCSKLCYAVGGAPYQTTGCALGFFLQIYL). The Extracellular segment spans residues 67–73 (LDVAQLD). Residues 74–99 (PFYASIILFVGRAWDAITDPMVGFFI) traverse the membrane as a helical segment. Residues 100–109 (SKTPWTRFGR) lie on the Cytoplasmic side of the membrane. Residues 110-129 (LMPWIIFSTPFAVISYFLIW) form a helical membrane-spanning segment. Residues 130–138 (FVPDISTGQ) are Extracellular-facing. A helical transmembrane segment spans residues 139-161 (VMWYLIFYCIFQTLVTCFHVPYS). Topologically, residues 162-176 (ALTMFISREQSERDS) are cytoplasmic. A helical membrane pass occupies residues 177–199 (ATAYRMTVEVLGTVLGTAIQGQI). The Extracellular portion of the chain corresponds to 200–241 (VGKAVTPCIENPPFLSETNFSVAIRNVNMTHYTGSLADTRNA). Cys207 and Cys460 form a disulfide bridge. 2 N-linked (GlcNAc...) asparagine glycosylation sites follow: Asn218 and Asn227. A helical transmembrane segment spans residues 242 to 263 (YMVAAGVIGGLYILCAVILSVG). The Cytoplasmic segment spans residues 264-295 (VREKRESSELQSDEPVSFFRGLKLVMNHGAYI). The helical transmembrane segment at 296-319 (KLITGFLFTSLAFMLLEGNFALFC) threads the bilayer. At 320–328 (TYTLGFRNE) the chain is on the extracellular side. Residues 329 to 351 (FQNILLAIMLSATLTIPFWQWFL) traverse the membrane as a helical segment. Residues 352-355 (TRFG) are Cytoplasmic-facing. Residues 356–376 (KKTAVYVGISSAVPFLITVVV) form a helical membrane-spanning segment. Over 377–381 (LDSNL) the chain is Extracellular. Residues 382–404 (VVTYIVAVAAGISVAAAFLLPWS) traverse the membrane as a helical segment. At 405–427 (MLPDVIDDFKLQHPESRGHEAIF) the chain is on the cytoplasmic side. A helical membrane pass occupies residues 428–450 (FSFYVFFTKFTSGVSLGISTLSL). Topologically, residues 451-467 (DFAGYQTRGCSQPSEVN) are extracellular. The helical transmembrane segment at 468 to 490 (ITLKLLVSAVPVGLILLGLLLFK) threads the bilayer. Residues 491–528 (LYPIDEEKRRENKKALQDLREESNSSSESDSTELANIV) are Cytoplasmic-facing. The span at 503–513 (KKALQDLREES) shows a compositional bias: basic and acidic residues. The disordered stretch occupies residues 503-528 (KKALQDLREESNSSSESDSTELANIV). A compositionally biased stretch (low complexity) spans 514-528 (NSSSESDSTELANIV).

This sequence belongs to the major facilitator superfamily.

Its subcellular location is the cell membrane. It localises to the endoplasmic reticulum membrane. The enzyme catalyses a 1-acyl-sn-glycero-3-phosphocholine(in) + Na(+)(in) = a 1-acyl-sn-glycero-3-phosphocholine(out) + Na(+)(out). The catalysed reaction is 1-(4Z,7Z,10Z,13Z,16Z,19Z-docosahexaenoyl)-sn-glycero-3-phosphocholine(in) + Na(+)(in) = 1-(4Z,7Z,10Z,13Z,16Z,19Z-docosahexaenoyl)-sn-glycero-3-phosphocholine(out) + Na(+)(out). It carries out the reaction 1-(9Z-octadecenoyl)-sn-glycero-3-phosphocholine(in) + Na(+)(in) = 1-(9Z-octadecenoyl)-sn-glycero-3-phosphocholine(out) + Na(+)(out). It catalyses the reaction 1-hexadecanoyl-sn-glycero-3-phosphocholine(in) + Na(+)(in) = 1-hexadecanoyl-sn-glycero-3-phosphocholine(out) + Na(+)(out). The enzyme catalyses a 1-acyl-sn-glycero-3-phosphoethanolamine(in) + Na(+)(in) = a 1-acyl-sn-glycero-3-phosphoethanolamine(out) + Na(+)(out). In terms of biological role, sodium-dependent lysophosphatidylcholine (LPC) symporter, which plays an essential role for blood-brain barrier formation and function. Specifically expressed in endothelium of the blood-brain barrier of micro-vessels and transports LPC into the brain. Transport of LPC is essential because it constitutes the major mechanism by which docosahexaenoic acid (DHA), an omega-3 fatty acid that is essential for normal brain growth and cognitive function, enters the brain. Transports LPC carrying long-chain fatty acids such LPC oleate and LPC palmitate with a minimum acyl chain length of 14 carbons. Does not transport docosahexaenoic acid in unesterified fatty acid. This Gallus gallus (Chicken) protein is Sodium-dependent lysophosphatidylcholine symporter 1.